We begin with the raw amino-acid sequence, 500 residues long: Aspartyl/glutamyl-tRNA(Asn/Gln) amidotransferase subunit B (500 aa).

The protein belongs to the GatB/GatE family. GatB subfamily. Heterotrimer of A, B and C subunits.

It catalyses the reaction L-glutamyl-tRNA(Gln) + L-glutamine + ATP + H2O = L-glutaminyl-tRNA(Gln) + L-glutamate + ADP + phosphate + H(+). It carries out the reaction L-aspartyl-tRNA(Asn) + L-glutamine + ATP + H2O = L-asparaginyl-tRNA(Asn) + L-glutamate + ADP + phosphate + 2 H(+). Its function is as follows. Allows the formation of correctly charged Asn-tRNA(Asn) or Gln-tRNA(Gln) through the transamidation of misacylated Asp-tRNA(Asn) or Glu-tRNA(Gln) in organisms which lack either or both of asparaginyl-tRNA or glutaminyl-tRNA synthetases. The reaction takes place in the presence of glutamine and ATP through an activated phospho-Asp-tRNA(Asn) or phospho-Glu-tRNA(Gln). This is Aspartyl/glutamyl-tRNA(Asn/Gln) amidotransferase subunit B from Brucella ovis (strain ATCC 25840 / 63/290 / NCTC 10512).